We begin with the raw amino-acid sequence, 203 residues long: Undecaprenyl phosphate transporter A (203 aa).

Helical transmembrane passes span Ala16 to Leu36, Leu48 to Leu68, Tyr108 to Ile128, Val137 to Leu157, and Leu173 to Ile193.

It belongs to the DedA family.

Its subcellular location is the cell membrane. Its function is as follows. Flippase that catalyzes the transport of undecaprenyl phosphate (UndP) across the cytoplasmic membrane, from the external side to the cytoplasmic side. Is involved in UndP recycling during peptidoglycan synthesis. This Staphylococcus aureus (strain NCTC 8325 / PS 47) protein is Undecaprenyl phosphate transporter A.